A 433-amino-acid polypeptide reads, in one-letter code: Protein translocase subunit SecY (433 aa).

The next 10 helical transmembrane spans lie at 17–37, 71–91, 117–137, 141–161, 184–204, 212–232, 268–288, 310–330, 366–386, and 388–408; these read IVFT…PIPG, IFAL…LMSV, LTVL…ESIV, GPVV…TLVV, LIIF…MFEL, PLIA…IIFF, GVIP…LANF, YILL…AIVF, LTVI…LLMN, and YVIS…VVLD.

It belongs to the SecY/SEC61-alpha family. In terms of assembly, component of the Sec protein translocase complex. Heterotrimer consisting of SecY, SecE and SecG subunits. The heterotrimers can form oligomers, although 1 heterotrimer is thought to be able to translocate proteins. Interacts with the ribosome. Interacts with SecDF, and other proteins may be involved. Interacts with SecA.

Its subcellular location is the cell inner membrane. Its function is as follows. The central subunit of the protein translocation channel SecYEG. Consists of two halves formed by TMs 1-5 and 6-10. These two domains form a lateral gate at the front which open onto the bilayer between TMs 2 and 7, and are clamped together by SecE at the back. The channel is closed by both a pore ring composed of hydrophobic SecY resides and a short helix (helix 2A) on the extracellular side of the membrane which forms a plug. The plug probably moves laterally to allow the channel to open. The ring and the pore may move independently. The protein is Protein translocase subunit SecY of Rickettsia felis (strain ATCC VR-1525 / URRWXCal2) (Rickettsia azadi).